Reading from the N-terminus, the 290-residue chain is Ankyrin repeat and SOCS box protein 9 (290 aa).

Met1 is modified (N-acetylmethionine). Residues Met1–Arg11 show a composition bias toward basic and acidic residues. Positions Met1–Phe20 are disordered. 6 ANK repeats span residues Ser31–Ile60, Asp64–Gly93, Asp97–Pro126, Glu129–Tyr158, His162–Gln191, and Gly194–Ala223. Residues Pro236–Leu290 enclose the SOCS box domain.

This sequence belongs to the ankyrin SOCS box (ASB) family. As to quaternary structure, substrate-recognition component of the ECS(ASB9) complex, composed of ASB9, CUL5, ELOB, ELOC and RNF7/RBX2.

It is found in the mitochondrion. It functions in the pathway protein modification; protein ubiquitination. Functionally, substrate-recognition component of a cullin-5-RING E3 ubiquitin-protein ligase complex (ECS complex, also named CRL5 complex), which mediates the ubiquitination and subsequent proteasomal degradation of target proteins. The ECS(ASB9) complex catalyzes ubiquitination of creatine kinases CKB and CKMT1A. In Mus musculus (Mouse), this protein is Ankyrin repeat and SOCS box protein 9.